The sequence spans 244 residues: CTD nuclear envelope phosphatase 1 (244 aa).

Residues 7–29 (LLGLRGFVAFAAKLWSFVLYLLR) traverse the membrane as a helical segment. Residues 58–225 (QVKRKVLVLD…NLLPMLDALR (168 aa)) form the FCP1 homology domain.

It belongs to the dullard family. In terms of assembly, interacts with bmpr1a, bmpr1b and bmpr2.

The protein localises to the membrane. It is found in the cytoplasm. Its subcellular location is the perinuclear region. It carries out the reaction O-phospho-L-seryl-[protein] + H2O = L-seryl-[protein] + phosphate. The catalysed reaction is O-phospho-L-threonyl-[protein] + H2O = L-threonyl-[protein] + phosphate. In terms of biological role, serine/threonine protein phosphatase that may dephosphorylate and activate lipins. Lipins are phosphatidate phosphatases that catalyze the conversion of phosphatidic acid to diacylglycerol and control the metabolism of fatty acids at different levels. May indirectly modulate the lipid composition of nuclear and/or endoplasmic reticulum membranes and be required for proper nuclear membrane morphology and/or dynamics. May also indirectly regulate the production of lipid droplets and triacylglycerol. Induces neuronal differentiation by antagonizing BMP signaling. Acts both by dephosphorylating BMPR1A and by promoting BMPR2 proteasomal degradation. This is CTD nuclear envelope phosphatase 1 (ctdnep1) from Xenopus laevis (African clawed frog).